The following is a 218-amino-acid chain: Capsid protein (218 aa).

At M1 the chain carries N-acetylmethionine; by host. The segment at 1-31 is disordered; it reads MDKSGSPNASRTSRRRRPRRGSRSASGADAG. Over residues 12 to 22 the composition is skewed to basic residues; the sequence is TSRRRRPRRGS.

It belongs to the cucumovirus capsid protein family.

It is found in the virion. In terms of biological role, capsid protein. Probably binds RNA and plays a role in packaging. This Cucumber mosaic virus (strain Trk7) (CMV) protein is Capsid protein.